Reading from the N-terminus, the 556-residue chain is Secreted lipase 4 (556 aa).

The signal sequence occupies residues 1–21 (MKLLTNIGTLLALSPVQQVSA). Residues Asn46, Asn263, Asn305, Asn411, and Asn453 are each glycosylated (N-linked (GlcNAc...) asparagine).

Belongs to the type-B carboxylesterase/lipase family.

It is found in the secreted. The enzyme catalyses a carboxylic ester + H2O = an alcohol + a carboxylate + H(+). In terms of biological role, secreted lipase involved in plant virulence. Has a substrate preference for p-nitrophenyl esters with a carbon chain length of C12 (p-nitrophenyl laureate). This Gibberella zeae (strain ATCC MYA-4620 / CBS 123657 / FGSC 9075 / NRRL 31084 / PH-1) (Wheat head blight fungus) protein is Secreted lipase 4.